The following is a 663-amino-acid chain: tRNA (guanine(26)-N(2))-dimethyltransferase (663 aa).

The transit peptide at 1 to 16 (MSLARTILWLSRPLRP) directs the protein to the mitochondrion. The Trm1 methyltransferase domain occupies 56-498 (ATVTEGAAKI…APPEALWDIM (443 aa)). R83 provides a ligand contact to S-adenosyl-L-methionine. The residue at position 121 (S121) is a Phosphoserine. Residues R165 and D183 each contribute to the S-adenosyl-L-methionine site. Zn(2+)-binding residues include C347, C350, C383, and C386. S516 is modified (phosphoserine). The segment at 534–574 (IREDANPSSRQRGLKRFQANPEANWGPRPRARPGGKAASED) is disordered. Residues 540–572 (PSSRQRGLKRFQANPEANWGPRPRARPGGKAAS) carry the Nuclear localization signal motif. The C3H1-type zinc finger occupies 599-626 (RLKTFPCKRFKEGTCQLGDQCCYSHSPA). S624 is subject to Phosphoserine. A disordered region spans residues 632 to 663 (GDIPIEECPETTTKISPGPKAAAGGIPGPGVD).

It belongs to the class I-like SAM-binding methyltransferase superfamily. Trm1 family.

The protein localises to the mitochondrion. It is found in the nucleus. The protein resides in the cytoplasm. The enzyme catalyses guanosine(26) in tRNA + 2 S-adenosyl-L-methionine = N(2)-dimethylguanosine(26) in tRNA + 2 S-adenosyl-L-homocysteine + 2 H(+). Dimethylates a single guanine residue at position 26 of most nuclear- and mitochondrial-encoded tRNAs using S-adenosyl-L-methionine as donor of the methyl groups. tRNA guanine(26)-dimethylation is required for redox homeostasis and ensure proper cellular proliferation and oxidative stress survival. The protein is tRNA (guanine(26)-N(2))-dimethyltransferase of Mus musculus (Mouse).